The following is a 347-amino-acid chain: NADH-ubiquinone oxidoreductase chain 2 (347 aa).

11 consecutive transmembrane segments (helical) span residues 3–23, 25–45, 67–87, 96–116, 122–142, 145–165, 178–198, 200–220, 237–257, 274–294, and 325–345; these read PIIL…VMIS, HWLL…PIMM, SMLL…WTVM, MLMT…FWVP, IPLS…MSVL, ILPS…ITIG, IMAY…LYNP, MTLL…TLFM, APIM…LPPL, DSII…YFYM, and LLPT…ILSI.

This sequence belongs to the complex I subunit 2 family. In terms of assembly, core subunit of respiratory chain NADH dehydrogenase (Complex I) which is composed of 45 different subunits. Interacts with TMEM242.

It is found in the mitochondrion inner membrane. The catalysed reaction is a ubiquinone + NADH + 5 H(+)(in) = a ubiquinol + NAD(+) + 4 H(+)(out). Core subunit of the mitochondrial membrane respiratory chain NADH dehydrogenase (Complex I) which catalyzes electron transfer from NADH through the respiratory chain, using ubiquinone as an electron acceptor. Essential for the catalytic activity and assembly of complex I. In Ovis aries (Sheep), this protein is NADH-ubiquinone oxidoreductase chain 2.